We begin with the raw amino-acid sequence, 515 residues long: MTKRVLISVSDKAGIVEFAQELKKLGWEIISTGGTKVALDNAGVDTIAIDDVTGFPEMMDGRVKTLHPNIHGGLLARRDLDSHLEAAKDNKIELIDLVVVNLYPFKETILKPDVTYADAVENIDIGGPSMLRSAAKNHASVTVVVDPADYAVVLDELAANGETSYETRQRLAAKVFRHTAAYDALIAKYFTAQVGESKPEKLTLTYDLKQPMRYGENPQQDADFYQKALPTDYSIASAKQLNGKELSFNNIRDADAAIRIIRDFKDSPTVVALKHMNPCGIGQADDIETAWEYAYESDPVSIFGGIVVLNREVDAATAEKMHGVFLEIIIAPSYTDEALAILINKKKNLRILALPFNAQEASEVEAEYTGVVGGLLVQNQDVVKESPADWQVVTKRQPTETEATALEFAWKAIKYVKSNGIIVTNDHMTLGVGPGQTNRVASVRLAIDQAKDRLDGAVLASDAFFPFADNVEEIAKAGIKAIIQPGGSVRDQESIEAADKYGLTMVFTGVRHFRH.

Residues 1-145 (MTKRVLISVS…KNHASVTVVV (145 aa)) enclose the MGS-like domain.

It belongs to the PurH family.

The enzyme catalyses (6R)-10-formyltetrahydrofolate + 5-amino-1-(5-phospho-beta-D-ribosyl)imidazole-4-carboxamide = 5-formamido-1-(5-phospho-D-ribosyl)imidazole-4-carboxamide + (6S)-5,6,7,8-tetrahydrofolate. It catalyses the reaction IMP + H2O = 5-formamido-1-(5-phospho-D-ribosyl)imidazole-4-carboxamide. The protein operates within purine metabolism; IMP biosynthesis via de novo pathway; 5-formamido-1-(5-phospho-D-ribosyl)imidazole-4-carboxamide from 5-amino-1-(5-phospho-D-ribosyl)imidazole-4-carboxamide (10-formyl THF route): step 1/1. It participates in purine metabolism; IMP biosynthesis via de novo pathway; IMP from 5-formamido-1-(5-phospho-D-ribosyl)imidazole-4-carboxamide: step 1/1. The sequence is that of Bifunctional purine biosynthesis protein PurH from Streptococcus pneumoniae (strain P1031).